We begin with the raw amino-acid sequence, 360 residues long: Membrane-bound lytic murein transglycosylase C (360 aa).

The signal sequence occupies residues M1–S16. A lipid anchor (N-palmitoyl cysteine) is attached at C17. C17 is lipidated: S-diacylglycerol cysteine.

Belongs to the transglycosylase Slt family.

Its subcellular location is the cell outer membrane. The enzyme catalyses Exolytic cleavage of the (1-&gt;4)-beta-glycosidic linkage between N-acetylmuramic acid (MurNAc) and N-acetylglucosamine (GlcNAc) residues in peptidoglycan, from either the reducing or the non-reducing ends of the peptidoglycan chains, with concomitant formation of a 1,6-anhydrobond in the MurNAc residue.. In terms of biological role, murein-degrading enzyme. May play a role in recycling of muropeptides during cell elongation and/or cell division. The chain is Membrane-bound lytic murein transglycosylase C from Citrobacter koseri (strain ATCC BAA-895 / CDC 4225-83 / SGSC4696).